The chain runs to 1893 residues: Plexin-A4 (1893 aa).

The first 23 residues, 1–23, serve as a signal peptide directing secretion; that stretch reads MKAMPWNWTCLLSHLLVVGMGSS. Residues 24-506 form the Sema domain; sequence TLLPRQPPQL…SERQLTRVPV (483 aa). The Extracellular segment spans residues 24–1236; the sequence is TLLPRQPPQL…IAPDSPLSLP (1213 aa). Disulfide bonds link Cys94–Cys103, Cys129–Cys137, Cys283–Cys404, Cys299–Cys355, Cys373–Cys392, Cys509–Cys526, Cys515–Cys557, Cys518–Cys535, Cys529–Cys541, and Cys592–Cys611. Residues 508–558 enclose the PSI 1 domain; the sequence is SCGQYRSCGECLGSGDPHCGWCVLHNTCTRKERCERSREPRRFASEMKQCV. A glycan (N-linked (GlcNAc...) asparagine) is linked at Asn654. PSI domains follow at residues 654-701 and 802-855; these read NCSV…EDCP and KCGA…SKCT. IPT/TIG domains lie at 857 to 951, 953 to 1036, 1039 to 1138, and 1141 to 1229; these read PRIT…YYFM, LTLA…FQYV, PTIV…FTYY, and PVFE…YIAP. Asn1006, Asn1131, and Asn1179 each carry an N-linked (GlcNAc...) asparagine glycan. A helical transmembrane segment spans residues 1237–1257; the sequence is AIVSIAVAGGLLIIFIVAVLI. Residues 1258–1893 are Cytoplasmic-facing; sequence AYKRKSRESD…QVITLMSLDS (636 aa). Residue Lys1349 is modified to N6-acetyllysine.

This sequence belongs to the plexin family. In terms of assembly, interacts with NRP1 and NRP2. As to expression, expressed in the developing nervous system. Widely expressed in both the central and peripheral nervous systems. Expressed in the peripheral ganglia, somatosensory, olfactory, visual, auditory and equilibrium systems.

Its subcellular location is the cell membrane. In terms of biological role, coreceptor for SEMA3A. Necessary for signaling by class 3 semaphorins and subsequent remodeling of the cytoskeleton. Plays a role in axon guidance in the developing nervous system. Class 3 semaphorins bind to a complex composed of a neuropilin and a plexin. The plexin modulates the affinity of the complex for specific semaphorins, and its cytoplasmic domain is required for the activation of down-stream signaling events in the cytoplasm. This is Plexin-A4 (Plxna4) from Mus musculus (Mouse).